A 24-amino-acid chain; its full sequence is Humanin-like 10 (24 aa).

It belongs to the humanin family. Expressed in mature brain, thyroid gland and testis.

The protein resides in the secreted. It is found in the cytoplasm. In terms of biological role, plays a role as a neuroprotective and antiapoptotic factor. This Homo sapiens (Human) protein is Humanin-like 10.